The sequence spans 636 residues: Chaperone protein DnaK (636 aa).

The residue at position 198 (threonine 198) is a Phosphothreonine; by autocatalysis. A disordered region spans residues 598-636; it reads YAAKEQPGEHGETGSGEQARKESGKDENVVDADFEEVKK. The span at 603-625 shows a compositional bias: basic and acidic residues; the sequence is QPGEHGETGSGEQARKESGKDEN. Residues 626–636 show a composition bias toward acidic residues; sequence VVDADFEEVKK.

Belongs to the heat shock protein 70 family.

Its function is as follows. Acts as a chaperone. This chain is Chaperone protein DnaK, found in Pelobacter propionicus (strain DSM 2379 / NBRC 103807 / OttBd1).